We begin with the raw amino-acid sequence, 303 residues long: Geranylgeranyl pyrophosphate synthase (303 aa).

The isopentenyl diphosphate site is built by lysine 32, arginine 35, and histidine 64. 2 residues coordinate Mg(2+): aspartate 71 and aspartate 75. Arginine 80 contacts dimethylallyl diphosphate. Arginine 81 provides a ligand contact to isopentenyl diphosphate. Dimethylallyl diphosphate is bound by residues lysine 158, threonine 159, glutamine 192, lysine 209, and lysine 219.

The protein belongs to the FPP/GGPP synthase family. Homooligomer. Mg(2+) serves as cofactor.

The protein resides in the cytoplasm. The enzyme catalyses isopentenyl diphosphate + dimethylallyl diphosphate = (2E)-geranyl diphosphate + diphosphate. It catalyses the reaction isopentenyl diphosphate + (2E)-geranyl diphosphate = (2E,6E)-farnesyl diphosphate + diphosphate. The catalysed reaction is isopentenyl diphosphate + (2E,6E)-farnesyl diphosphate = (2E,6E,10E)-geranylgeranyl diphosphate + diphosphate. It functions in the pathway isoprenoid biosynthesis; farnesyl diphosphate biosynthesis; farnesyl diphosphate from geranyl diphosphate and isopentenyl diphosphate: step 1/1. Its pathway is isoprenoid biosynthesis; geranyl diphosphate biosynthesis; geranyl diphosphate from dimethylallyl diphosphate and isopentenyl diphosphate: step 1/1. It participates in isoprenoid biosynthesis; geranylgeranyl diphosphate biosynthesis; geranylgeranyl diphosphate from farnesyl diphosphate and isopentenyl diphosphate: step 1/1. Catalyzes the trans-addition of the three molecules of IPP onto DMAPP to form geranylgeranyl pyrophosphate, an important precursor of carotenoids and geranylated proteins. This is Geranylgeranyl pyrophosphate synthase (ggps1) from Dictyostelium discoideum (Social amoeba).